The primary structure comprises 115 residues: MMSAKDMVKVMIVMLAICFLARSDGKSVKKRAVSEIQFMHNLGKHLSSMERVEWLRKKLQDVHNFVALGASIAYRDGSSQRPRKKEDNVLVESHQKSLGEADKADVDVLIKAKPQ.

Positions 1 to 25 (MMSAKDMVKVMIVMLAICFLARSDG) are cleaved as a signal peptide. The propeptide occupies 26-31 (KSVKKR). The interval 51–69 (RVEWLRKKLQDVHNFVALG) is important for receptor binding. Residues 77 to 99 (GSSQRPRKKEDNVLVESHQKSLG) form a disordered region. Over residues 84–99 (KKEDNVLVESHQKSLG) the composition is skewed to basic and acidic residues.

It belongs to the parathyroid hormone family. As to quaternary structure, interacts with PTH1R (via N-terminal extracellular domain).

It localises to the secreted. In terms of biological role, parathyroid hormone elevates calcium level by dissolving the salts in bone and preventing their renal excretion. Acts by binding to its receptor, PTH1R, activating G protein-coupled receptor signaling. Stimulates [1-14C]-2-deoxy-D-glucose (2DG) transport and glycogen synthesis in osteoblastic cells. In Bos taurus (Bovine), this protein is Parathyroid hormone.